A 283-amino-acid polypeptide reads, in one-letter code: Cyclin-C (283 aa).

The 132-residue stretch at Asp20 to Ile151 folds into the Cyclin N-terminal domain. The segment at Thr252–Ser283 is disordered. Residues Pro272–Ser283 are compositionally biased toward polar residues. Ser275 carries the post-translational modification Phosphoserine.

Belongs to the cyclin family. Cyclin C subfamily. Component of the Mediator complex, which is composed of MED1, MED4, MED6, MED7, MED8, MED9, MED10, MED11, MED12, MED13, MED13L, MED14, MED15, MED16, MED17, MED18, MED19, MED20, MED21, MED22, MED23, MED24, MED25, MED26, MED27, MED29, MED30, MED31, CCNC, CDK8 and CDC2L6/CDK11. The MED12, MED13, CCNC and CDK8 subunits form a distinct module termed the CDK8 module. Mediator containing the CDK8 module is less active than Mediator lacking this module in supporting transcriptional activation. Individual preparations of the Mediator complex lacking one or more distinct subunits have been variously termed ARC, CRSP, DRIP, PC2, SMCC and TRAP. The cylin/CDK pair formed by CCNC/CDK8 also associates with the large subunit of RNA polymerase II.

It is found in the nucleus. Component of the Mediator complex, a coactivator involved in regulated gene transcription of nearly all RNA polymerase II-dependent genes. Mediator functions as a bridge to convey information from gene-specific regulatory proteins to the basal RNA polymerase II transcription machinery. Mediator is recruited to promoters by direct interactions with regulatory proteins and serves as a scaffold for the assembly of a functional preinitiation complex with RNA polymerase II and the general transcription factors. Binds to and activates cyclin-dependent kinase CDK8 that phosphorylates the CTD (C-terminal domain) of the large subunit of RNA polymerase II (RNAp II), which may inhibit the formation of a transcription initiation complex. The protein is Cyclin-C (Ccnc) of Mus musculus (Mouse).